The following is a 229-amino-acid chain: Small ribosomal subunit protein uS3 (229 aa).

The 69-residue stretch at valine 39 to arginine 107 folds into the KH type-2 domain.

Belongs to the universal ribosomal protein uS3 family. As to quaternary structure, part of the 30S ribosomal subunit. Forms a tight complex with proteins S10 and S14.

In terms of biological role, binds the lower part of the 30S subunit head. Binds mRNA in the 70S ribosome, positioning it for translation. The polypeptide is Small ribosomal subunit protein uS3 (Shewanella denitrificans (strain OS217 / ATCC BAA-1090 / DSM 15013)).